We begin with the raw amino-acid sequence, 452 residues long: Pup--protein ligase (452 aa).

Glu9 is a binding site for Mg(2+). Arg53 lines the ATP pocket. Residue Tyr55 coordinates Mg(2+). Asp57 functions as the Proton acceptor in the catalytic mechanism. Residue Glu63 coordinates Mg(2+). Positions 66 and 419 each coordinate ATP.

The protein belongs to the Pup ligase/Pup deamidase family. Pup-conjugating enzyme subfamily.

The enzyme catalyses ATP + [prokaryotic ubiquitin-like protein]-L-glutamate + [protein]-L-lysine = ADP + phosphate + N(6)-([prokaryotic ubiquitin-like protein]-gamma-L-glutamyl)-[protein]-L-lysine.. It participates in protein degradation; proteasomal Pup-dependent pathway. The protein operates within protein modification; protein pupylation. Functionally, catalyzes the covalent attachment of the prokaryotic ubiquitin-like protein modifier Pup to the proteasomal substrate proteins, thereby targeting them for proteasomal degradation. This tagging system is termed pupylation. The ligation reaction involves the side-chain carboxylate of the C-terminal glutamate of Pup and the side-chain amino group of a substrate lysine. The chain is Pup--protein ligase from Mycobacteroides abscessus (strain ATCC 19977 / DSM 44196 / CCUG 20993 / CIP 104536 / JCM 13569 / NCTC 13031 / TMC 1543 / L948) (Mycobacterium abscessus).